Here is a 477-residue protein sequence, read N- to C-terminus: Glycogen synthase (477 aa).

Residue K15 participates in ADP-alpha-D-glucose binding.

This sequence belongs to the glycosyltransferase 1 family. Bacterial/plant glycogen synthase subfamily.

It carries out the reaction [(1-&gt;4)-alpha-D-glucosyl](n) + ADP-alpha-D-glucose = [(1-&gt;4)-alpha-D-glucosyl](n+1) + ADP + H(+). The protein operates within glycan biosynthesis; glycogen biosynthesis. Functionally, synthesizes alpha-1,4-glucan chains using ADP-glucose. This chain is Glycogen synthase, found in Shigella flexneri.